The primary structure comprises 232 residues: 2-C-methyl-D-erythritol 4-phosphate cytidylyltransferase (232 aa).

The protein belongs to the IspD/TarI cytidylyltransferase family. IspD subfamily.

It carries out the reaction 2-C-methyl-D-erythritol 4-phosphate + CTP + H(+) = 4-CDP-2-C-methyl-D-erythritol + diphosphate. Its pathway is isoprenoid biosynthesis; isopentenyl diphosphate biosynthesis via DXP pathway; isopentenyl diphosphate from 1-deoxy-D-xylulose 5-phosphate: step 2/6. Catalyzes the formation of 4-diphosphocytidyl-2-C-methyl-D-erythritol from CTP and 2-C-methyl-D-erythritol 4-phosphate (MEP). The sequence is that of 2-C-methyl-D-erythritol 4-phosphate cytidylyltransferase from Deinococcus radiodurans (strain ATCC 13939 / DSM 20539 / JCM 16871 / CCUG 27074 / LMG 4051 / NBRC 15346 / NCIMB 9279 / VKM B-1422 / R1).